We begin with the raw amino-acid sequence, 151 residues long: 3-hydroxyacyl-[acyl-carrier-protein] dehydratase FabZ (151 aa).

His-49 is an active-site residue.

This sequence belongs to the thioester dehydratase family. FabZ subfamily.

The protein localises to the cytoplasm. It catalyses the reaction a (3R)-hydroxyacyl-[ACP] = a (2E)-enoyl-[ACP] + H2O. Its function is as follows. Involved in unsaturated fatty acids biosynthesis. Catalyzes the dehydration of short chain beta-hydroxyacyl-ACPs and long chain saturated and unsaturated beta-hydroxyacyl-ACPs. The sequence is that of 3-hydroxyacyl-[acyl-carrier-protein] dehydratase FabZ from Wolinella succinogenes (strain ATCC 29543 / DSM 1740 / CCUG 13145 / JCM 31913 / LMG 7466 / NCTC 11488 / FDC 602W) (Vibrio succinogenes).